Here is a 559-residue protein sequence, read N- to C-terminus: Probable alpha-(1-&gt;6)-mannopyranosyltransferase MSMEG_3120/MSMEI_3041 (559 aa).

A run of 12 helical transmembrane segments spans residues 41–61 (FGATGTVLMAIGALGAGARPV), 81–101 (VSLTMTTTGAVMMALAWLMLG), 202–222 (IVEAVMCHRLVVLIGVGLIVW), 247–267 (LLFMHLVAGIHNEALMLGLML), 300–316 (WQPMAMLVLGAVLIAMS), 321–340 (LPSLLALGFVAMALAWRWGG), 355–375 (ISLAVMAVIGWASGLGFGWLF), 386–406 (WMSPPTLIALGTGQVGILLGL), 419–439 (AIGVFMISILVSWLLFAVLRG), 455–475 (VLLFPVVQPWYLLWAIIPLAA), 480–500 (PGFRGATIAITLIVGIFGPTA), and 507–527 (LFQIVMATLASAVTVLLLIAL). The segment covering 535-548 (RPAPEPPARPPEQP) has biased composition (pro residues). The tract at residues 535 to 559 (RPAPEPPARPPEQPAPADDAYAESP) is disordered.

The protein belongs to the MptA/B family.

It is found in the membrane. Functionally, catalyzes the addition of alpha-(1-&gt;6)-mannose residue. The protein is Probable alpha-(1-&gt;6)-mannopyranosyltransferase MSMEG_3120/MSMEI_3041 of Mycolicibacterium smegmatis (strain ATCC 700084 / mc(2)155) (Mycobacterium smegmatis).